A 489-amino-acid polypeptide reads, in one-letter code: Occludin (489 aa).

Over 1–51 (MMYEKRSYTGYGHPSSHYDYPPPSGPPGSFYLADVPPQHFYQWRSPPGIVR) the chain is Cytoplasmic. In terms of domain architecture, MARVEL spans 45-248 (SPPGIVRILQ…ICYFAQKTRH (204 aa)). A helical membrane pass occupies residues 52 to 74 (ILQGSVVILCLVIFACVASTLAW). The Extracellular portion of the chain corresponds to 75-112 (EYYGSGGLLGYGGGLGSYYNGYYGGYNGYYYGGLTNPR). A helical membrane pass occupies residues 113 to 137 (AANGFMIAMAVLCFLVTLGLVIAGL). The Cytoplasmic portion of the chain corresponds to 138-147 (SKASGARSRR). A helical transmembrane segment spans residues 148–172 (FYLLVAVLSGLLAFVMLIASIVYVV). The Extracellular portion of the chain corresponds to 173–222 (GVNPRAGLGASSGSLYYNQMLMLCNQMMSPVAGGIMNQYLYHYCMVDPQE). Cys-196 and Cys-216 are disulfide-bonded. The helical transmembrane segment at 223-244 (AVAIVCGFLTVILLCVICYFAQ) threads the bilayer. The Cytoplasmic portion of the chain corresponds to 245-489 (KTRHKIWKYG…MVGGYDQSRS (245 aa)). The residue at position 280 (Ser-280) is a Phosphoserine. Thr-285 bears the Phosphothreonine mark. Ser-300 bears the Phosphoserine mark. The interval 308–382 (PAQENGYGHS…ESSGEQNRDD (75 aa)) is disordered. Pro residues predominate over residues 322–332 (PSVPPPEGPSP). Over residues 345 to 354 (PARRGHRQRP) the composition is skewed to basic residues. Residues Tyr-364 and Tyr-368 each carry the phosphotyrosine modification. The segment covering 365–377 (ETDYTTAAESSGE) has biased composition (polar residues). 2 positions are modified to phosphothreonine; by PKC/PRKCH: Thr-369 and Thr-370. Residue Ser-374 is modified to Phosphoserine. In terms of domain architecture, OCEL spans 381 to 489 (DDWASLYPPI…MVGGYDQSRS (109 aa)). Positions 407 to 434 (LQRYKALCAEMDDIGTQLRQLSHELDCL) form a coiled coil. Ser-457 is modified (phosphoserine).

This sequence belongs to the ELL/occludin family. As to quaternary structure, interacts with TJP1/ZO1. Interacts with VAPA. Interacts with CLDN1, CLDN6, CLDN9, CLDN11, CLDN12 and CLDN17. Interacts with PLSCR1. Interacts with LSR, ILDR1 and ILDR2. Interacts with TJP2/ZO2. In terms of processing, dephosphorylated by PTPRJ. As to expression, localized at tight junctions of both epithelial and endothelial cells.

The protein localises to the cell membrane. It localises to the cell junction. It is found in the tight junction. In terms of biological role, may play a role in the formation and regulation of the tight junction (TJ) paracellular permeability barrier. In Potorous tridactylus (Potoroo), this protein is Occludin (OCLN).